Here is a 463-residue protein sequence, read N- to C-terminus: ATP-dependent protease ATPase subunit HslU (463 aa).

ATP-binding positions include Ile19, 61–66 (GVGKTE), Asp277, Glu341, and Arg413.

This sequence belongs to the ClpX chaperone family. HslU subfamily. In terms of assembly, a double ring-shaped homohexamer of HslV is capped on each side by a ring-shaped HslU homohexamer. The assembly of the HslU/HslV complex is dependent on binding of ATP.

It localises to the cytoplasm. Functionally, ATPase subunit of a proteasome-like degradation complex; this subunit has chaperone activity. The binding of ATP and its subsequent hydrolysis by HslU are essential for unfolding of protein substrates subsequently hydrolyzed by HslV. HslU recognizes the N-terminal part of its protein substrates and unfolds these before they are guided to HslV for hydrolysis. The polypeptide is ATP-dependent protease ATPase subunit HslU (Bacillus cytotoxicus (strain DSM 22905 / CIP 110041 / 391-98 / NVH 391-98)).